Here is a 308-residue protein sequence, read N- to C-terminus: 2-methylisocitrate lyase (308 aa).

54–56 (SGG) lines the substrate pocket. Residues D94 and D96 each contribute to the Mg(2+) site. Substrate contacts are provided by residues 131–132 (CG), R166, E196, 224–226 (NIT), R255, and R284.

This sequence belongs to the isocitrate lyase/PEP mutase superfamily. Methylisocitrate lyase family. Homotetramer; dimer of dimers. It depends on Mg(2+) as a cofactor.

It catalyses the reaction (2S,3R)-3-hydroxybutane-1,2,3-tricarboxylate = pyruvate + succinate. It functions in the pathway organic acid metabolism; propanoate degradation. Involved in the catabolism of short chain fatty acids (SCFA) via the 2-methylcitrate cycle I (propionate degradation route). Catalyzes the thermodynamically favored C-C bond cleavage reaction of (2R,3S)-2-methylisocitrate to yield pyruvate and succinate via an alpha-carboxy-carbanion intermediate. The sequence is that of 2-methylisocitrate lyase from Vibrio cholerae serotype O1 (strain ATCC 39315 / El Tor Inaba N16961).